Reading from the N-terminus, the 750-residue chain is Iron-sulfur clusters transporter ATM1, mitochondrial (750 aa).

The transit peptide at 1–16 (MFIRNVKLIKPSPVRF) directs the protein to the mitochondrion. The Mitochondrial matrix segment spans residues 17-124 (ISPIPFSFPI…PKNNLNFKIR (108 aa)). 2 stretches are compositionally biased toward low complexity: residues 43–75 (TSNF…KTLS) and 87–100 (DNDT…SSEN). Residues 43-100 (TSNFKSTSSSSSLKSTSTSTSTSTSKTTPKTLSKPPPKVKPPIQDNDTTSSGSSSSEN) are disordered. The helical transmembrane segment at 125 to 146 (VIIALSLLVGAKILNVQVPFYF) threads the bilayer. The region spanning 125–415 (VIIALSLLVG…LGSVYRELKQ (291 aa)) is the ABC transmembrane type-1 domain. The Mitochondrial intermembrane segment spans residues 147–169 (KQIIDTMNIDWTNEVGVFSTVIG). A helical membrane pass occupies residues 170 to 193 (SLILAYGGARFGAVLFGELRNAIF). At 194–242 (ASVAQSAIRRVAYNTFVKLLNMDLQFHLSRQTGGLTRAIDRGTKGISYV) the chain is on the mitochondrial matrix side. Residues 243–266 (LSAMVFHIIPITLEISIVCGILTY) form a helical membrane-spanning segment. Residue Asn-267 is a topological domain, mitochondrial intermembrane. The chain crosses the membrane as a helical span at residues 268–288 (YGASFAAMTFVTMLAYSIFTI). The Mitochondrial matrix portion of the chain corresponds to 289–354 (QTTAWRTKFR…SSVKIATSLA (66 aa)). Residues 294–298 (RTKFR) and 357–360 (NSGQ) contribute to the glutathione site. The helical transmembrane segment at 355–373 (FLNSGQNFIFTSALTAMMY) threads the bilayer. The Mitochondrial intermembrane segment spans residues 374 to 388 (MGCQGVYTGELTVGD). The helical transmembrane segment at 389–410 (LVLINQLVFQLSVPLNFLGSVY) threads the bilayer. Gly-407 serves as a coordination point for glutathione. Over 411–750 (RELKQSLLDM…LFNSQTFEKK (340 aa)) the chain is Mitochondrial matrix. The disordered stretch occupies residues 437 to 462 (PNAPPLKLNNNNNNNNNNNNNNNNSL). Low complexity predominate over residues 445-460 (NNNNNNNNNNNNNNNN). In terms of domain architecture, ABC transporter spans 466-702 (IRFENVSFGY…QPNSLYAQLW (237 aa)). ATP-binding positions include Tyr-475 and 499–510 (GPSGSGKSTILR).

Belongs to the ABC transporter superfamily. ABCB family. Heavy Metal importer (TC 3.A.1.210) subfamily. As to quaternary structure, homodimer.

The protein localises to the mitochondrion inner membrane. In terms of biological role, performs an essential function in the generation of cytoplasmic iron-sulfur proteins by mediating the ATP-dependent export of Fe/S cluster precursors synthesized by NFS1 and other mitochondrial proteins. Hydrolyzes ATP. Binds glutathione and may function by transporting a glutathione-conjugated iron-sulfur compound. This is Iron-sulfur clusters transporter ATM1, mitochondrial from Candida albicans (strain SC5314 / ATCC MYA-2876) (Yeast).